The chain runs to 319 residues: ADP-ribosyl cyclase/cyclic ADP-ribose hydrolase 2 (319 aa).

Positions 1 to 33 are cleaved as a signal peptide; that stretch reads MAVQACALSLRLGLWMSLLLPVLPGAGARAAGA. 3 cysteine pairs are disulfide-bonded: C52–C68, C84–C164, and C145–C158. N-linked (GlcNAc...) asparagine glycans are attached at residues N67 and N96. W110 is an NAD(+) binding site. W110 provides a ligand contact to nicotinamide. An N-linked (GlcNAc...) asparagine glycan is attached at N149. Residue W173 coordinates NAD(+). N193 carries an N-linked (GlcNAc...) asparagine glycan. An NAD(+)-binding site is contributed by E211. 2 cysteine pairs are disulfide-bonded: C239-C260 and C272-C281. Residue S294 is the site of GPI-anchor amidated serine attachment. Residues 295–319 constitute a propeptide that is removed on maturation; that stretch reads PALHAIGDISLIISLLVALASSSQA.

Belongs to the ADP-ribosyl cyclase family. In terms of assembly, homodimer. Pancreatic islets, kidney, spleen, heart, thymus, intestine and salivary gland.

Its subcellular location is the cell membrane. It carries out the reaction NAD(+) + H2O = ADP-D-ribose + nicotinamide + H(+). The catalysed reaction is NAD(+) = cyclic ADP-beta-D-ribose + nicotinamide + H(+). The enzyme catalyses cyclic ADP-beta-D-ribose + H2O = ADP-D-ribose. Catalyzes both the synthesis of cyclic ADP-beta-D-ribose (cADPR) from NAD(+), and its hydrolysis to ADP-D-ribose (ADPR). Cyclic ADPR is known to serve as an endogenous second messenger that elicits calcium release from intracellular stores, and thus regulates the mobilization of intracellular calcium. May be involved in pre-B-cell growth. This Rattus norvegicus (Rat) protein is ADP-ribosyl cyclase/cyclic ADP-ribose hydrolase 2 (Bst1).